The chain runs to 408 residues: Histidine--tRNA ligase (408 aa).

Belongs to the class-II aminoacyl-tRNA synthetase family. Homodimer.

It localises to the cytoplasm. It carries out the reaction tRNA(His) + L-histidine + ATP = L-histidyl-tRNA(His) + AMP + diphosphate + H(+). The chain is Histidine--tRNA ligase from Campylobacter concisus (strain 13826).